The sequence spans 429 residues: Glutamate-1-semialdehyde 2,1-aminomutase (429 aa).

At Lys-265 the chain carries N6-(pyridoxal phosphate)lysine.

It belongs to the class-III pyridoxal-phosphate-dependent aminotransferase family. HemL subfamily. In terms of assembly, homodimer. It depends on pyridoxal 5'-phosphate as a cofactor.

It is found in the cytoplasm. It carries out the reaction (S)-4-amino-5-oxopentanoate = 5-aminolevulinate. It participates in porphyrin-containing compound metabolism; protoporphyrin-IX biosynthesis; 5-aminolevulinate from L-glutamyl-tRNA(Glu): step 2/2. The chain is Glutamate-1-semialdehyde 2,1-aminomutase from Shewanella piezotolerans (strain WP3 / JCM 13877).